Reading from the N-terminus, the 334-residue chain is tRNA uridine(34) hydroxylase (334 aa).

Positions 123-217 (SDPDVILVDT…YLEEVKAEES (95 aa)) constitute a Rhodanese domain. Catalysis depends on Cys-177, which acts as the Cysteine persulfide intermediate.

This sequence belongs to the TrhO family.

The catalysed reaction is uridine(34) in tRNA + AH2 + O2 = 5-hydroxyuridine(34) in tRNA + A + H2O. Functionally, catalyzes oxygen-dependent 5-hydroxyuridine (ho5U) modification at position 34 in tRNAs. The protein is tRNA uridine(34) hydroxylase of Shewanella baltica (strain OS223).